The primary structure comprises 434 residues: Serine hydroxymethyltransferase (434 aa).

(6S)-5,6,7,8-tetrahydrofolate-binding positions include Leu133 and 137–139 (GHL). Lys242 carries the N6-(pyridoxal phosphate)lysine modification.

The protein belongs to the SHMT family. Homodimer. Requires pyridoxal 5'-phosphate as cofactor.

It localises to the cytoplasm. It catalyses the reaction (6R)-5,10-methylene-5,6,7,8-tetrahydrofolate + glycine + H2O = (6S)-5,6,7,8-tetrahydrofolate + L-serine. It functions in the pathway one-carbon metabolism; tetrahydrofolate interconversion. Its pathway is amino-acid biosynthesis; glycine biosynthesis; glycine from L-serine: step 1/1. Catalyzes the reversible interconversion of serine and glycine with tetrahydrofolate (THF) serving as the one-carbon carrier. This reaction serves as the major source of one-carbon groups required for the biosynthesis of purines, thymidylate, methionine, and other important biomolecules. Also exhibits THF-independent aldolase activity toward beta-hydroxyamino acids, producing glycine and aldehydes, via a retro-aldol mechanism. This chain is Serine hydroxymethyltransferase, found in Methylorubrum extorquens (strain CM4 / NCIMB 13688) (Methylobacterium extorquens).